The following is a 298-amino-acid chain: MLEKSLATLFALLILATLINRFLLWRLPERKGGEVTLRIRTWWGIVICFSMVISGPRWMTLTFFALISFLALKEYCTLISVHFPRWLYWGIPLNYLLIGFNCFELFLLFIPLAGFLILATGQVLVGDPSGFLHTVSAIFWGWIMTVFALSHAAWLLMLPTTNIQGGALLVLFLLALTESNDIAQYLWGKSCGRRKVVPKVSPGKTLEGLMGGVITIMIASLIIGPLLTPLNTLQALLAGLLIGISGFCGDVVMSAIKRDIGVKDSGKLLPGHGGLLDRIDSLIFTAPVFFYFIRYCCY.

The next 8 membrane-spanning stretches (helical) occupy residues S5–W25, V52–L72, L105–V125, I138–L158, I163–A183, G208–T228, L236–I256, and G273–I293.

The protein belongs to the CDS family.

Its subcellular location is the cell membrane. This is an uncharacterized protein from Escherichia coli (strain K12).